The following is a 308-amino-acid chain: uncharacterized protein (308 aa).

An HTH lysR-type domain is found at 1–60; that stretch reads MNYSLKQLKVFVTVAQEKSFSRAGERIGLSQSAVSHSVKELENHTGVRLLDRTTREVVLT. Positions 20–39 form a DNA-binding region, H-T-H motif; sequence FSRAGERIGLSQSAVSHSVK.

It belongs to the LysR transcriptional regulatory family.

This is an uncharacterized protein from Shigella flexneri.